The primary structure comprises 522 residues: Perilipin-1 (522 aa).

At serine 81 the chain carries Phosphoserine. Threonine 85 carries the phosphothreonine modification. Phosphoserine occurs at positions 126, 130, 132, 137, and 174. Disordered stretches follow at residues 195 to 217 (DKEE…AKPS) and 287 to 318 (LAAA…EENK). A compositionally biased stretch (acidic residues) spans 291 to 314 (QEEDHEDQTDTEGEDTEEEEELET). Residues 291–319 (QEEDHEDQTDTEGEDTEEEEELETEENKF) are required for interaction with CIDEC. Threonine 299 and threonine 301 each carry phosphothreonine. Phosphoserine is present on residues serine 382, serine 384, and serine 408. The disordered stretch occupies residues 413–522 (ESEFRDIDNP…THYSQLRKKS (110 aa)). Residues 414-435 (SEFRDIDNPPAEVERREAERRA) show a composition bias toward basic and acidic residues. Phosphoserine is present on residues serine 436, serine 497, and serine 499.

The protein belongs to the perilipin family. Interacts with ABHD5. Interacts with CIDEC. Interacts with AQP7. Post-translationally, major cAMP-dependent protein kinase-substrate in adipocytes, also dephosphorylated by PP1. When phosphorylated, may be maximally sensitive to HSL and when unphosphorylated, may play a role in the inhibition of lipolysis, by acting as a barrier in lipid droplet. Detected in adipocytes from white adipose tissue (at protein level). Detected in visceral adipose tissue and mammary gland.

It localises to the endoplasmic reticulum. Its subcellular location is the lipid droplet. Functionally, modulator of adipocyte lipid metabolism. Coats lipid storage droplets to protect them from breakdown by hormone-sensitive lipase (HSL). Its absence may result in leanness. Plays a role in unilocular lipid droplet formation by activating CIDEC. Their interaction promotes lipid droplet enlargement and directional net neutral lipid transfer. May modulate lipolysis and triglyceride levels. This is Perilipin-1 (PLIN1) from Homo sapiens (Human).